A 1470-amino-acid polypeptide reads, in one-letter code: Actin cytoskeleton-regulatory complex protein pan1 (1470 aa).

Positions 1 to 157 (MYSSSNSFLG…PPPKSSGSKI (157 aa)) are disordered. Positions 25–48 (QPPYSQFPQGQQQIPQQTGFQPQP) are enriched in low complexity. Residues 54-75 (QSASHLQPQPTGFPTGQLQPQF) show a composition bias toward polar residues. A compositionally biased stretch (low complexity) spans 77 to 101 (GFPGAAPQQQQQQLGGYQAPAQQPQ). Positions 129 to 139 (RTSSEIANSFS) are enriched in polar residues. One can recognise an EH 1 domain in the interval 169 to 257 (DQAKFEQLFK…DKIKNEVSSM (89 aa)). The 36-residue stretch at 201 to 236 (LPGSELSKIWVLSDTTKSGQLFFPEFALAMYLCNLR) folds into the EF-hand 1 domain. Disordered regions lie at residues 282–305 (DAPLLENKSAPPAPQHPKPQQPSN) and 343–377 (QATGFPGQSQQQYLQPQPTGLMTNPQATGYNGPRP). A compositionally biased stretch (pro residues) spans 292–301 (PPAPQHPKPQ). Low complexity predominate over residues 348–360 (PGQSQQQYLQPQP). The region spanning 458–547 (EKKIYDDLFR…PELIPPSTRN (90 aa)) is the EH 2 domain. Residues 491 to 526 (LDRKDLERIWTLADPNNRGRLNMDEFAVAMHLIYRK) enclose the EF-hand 2 domain. 4 disordered regions span residues 614 to 641 (GYRSSARRRMGNDARPSSPAASQASEEE), 794 to 864 (ELAG…HERR), 886 to 1087 (GSRT…LKEK), and 1099 to 1470 (EQVR…RVLD). Residues 627-637 (ARPSSPAASQA) show a composition bias toward low complexity. Positions 633-758 (AASQASEEEL…LFRLKDAKAH (126 aa)) form a coiled coil. 2 stretches are compositionally biased toward basic and acidic residues: residues 809–864 (AAAR…HERR) and 892–910 (VRKEEESRASEQRLRHEEP). Residues 917-932 (LSPAPSAGSAGSLPGS) show a composition bias toward low complexity. 5 stretches are compositionally biased toward basic and acidic residues: residues 933 to 951 (THEDRVAAARERAQRRIAE), 971 to 1006 (RQEREKREREERLRQAEEEDAKREQERQRRLAEEQR), 1052 to 1087 (AAREQAIREEQQAQEEETNRLEMEAQQREEELLKEK), 1099 to 1127 (EQVRQGKIRKQEEKRRKEEAERLAKEKEA), and 1134 to 1146 (AEIERAKERERQL). Residues 963 to 1159 (DTSETLLQRQ…LEGLDEESSS (197 aa)) adopt a coiled-coil conformation. A compositionally biased stretch (acidic residues) spans 1151–1163 (EGLDEESSSDDEG). The segment covering 1169–1180 (PEDSTPTQSQLL) has biased composition (polar residues). Low complexity predominate over residues 1181-1195 (PTVTPAAPVSAPESE). Positions 1243–1269 (PNVTSPRADVHSTNPFHRLAQQESSKP) are enriched in polar residues. Over residues 1277–1286 (LERKSRARPE) the composition is skewed to basic and acidic residues. Over residues 1340-1352 (SKSSTPVQDSPVT) the composition is skewed to polar residues. Composition is skewed to pro residues over residues 1367-1380 (AAPPPPPPPPPPAA) and 1389-1433 (APPP…PTPA). The WH2 domain maps to 1437 to 1454 (DRSALLASIQMGKGLRKV). The segment covering 1457 to 1470 (NDRSTSSSAGRVLD) has biased composition (polar residues).

This sequence belongs to the PAN1 family. As to quaternary structure, component of the PAN1 actin cytoskeleton-regulatory complex.

It is found in the cell membrane. The protein resides in the endosome membrane. Its subcellular location is the cytoplasm. The protein localises to the cytoskeleton. It localises to the actin patch. Functionally, component of the PAN1 actin cytoskeleton-regulatory complex required for the internalization of endosomes during actin-coupled endocytosis. The complex links the site of endocytosis to the cell membrane-associated actin cytoskeleton. Mediates uptake of external molecules and vacuolar degradation of plasma membrane proteins. Plays a role in the proper organization of the cell membrane-associated actin cytoskeleton and promotes its destabilization. In Neosartorya fischeri (strain ATCC 1020 / DSM 3700 / CBS 544.65 / FGSC A1164 / JCM 1740 / NRRL 181 / WB 181) (Aspergillus fischerianus), this protein is Actin cytoskeleton-regulatory complex protein pan1 (pan1).